A 553-amino-acid chain; its full sequence is CTP synthase (553 aa).

The amidoligase domain stretch occupies residues 1 to 266 (MTKNYIFITG…DNYICEYFKL (266 aa)). Residue Ser14 coordinates CTP. Ser14 provides a ligand contact to UTP. ATP is bound by residues 15–20 (SLGKGI) and Asp72. Asp72 and Glu140 together coordinate Mg(2+). Residues 147-149 (DIE), 187-192 (KTKPTQ), and Lys223 contribute to the CTP site. Residues 187–192 (KTKPTQ) and Lys223 contribute to the UTP site. An ATP-binding site is contributed by 239 to 241 (KDV). The 254-residue stretch at 291-544 (IIGIIGKYIK…IKSAKKNKKN (254 aa)) folds into the Glutamine amidotransferase type-1 domain. Gly352 contributes to the L-glutamine binding site. The Nucleophile; for glutamine hydrolysis role is filled by Cys379. L-glutamine contacts are provided by residues 380-383 (LGMQ), Glu403, and Arg472. Residues His517 and Glu519 contribute to the active site.

The protein belongs to the CTP synthase family. As to quaternary structure, homotetramer.

The catalysed reaction is UTP + L-glutamine + ATP + H2O = CTP + L-glutamate + ADP + phosphate + 2 H(+). The enzyme catalyses L-glutamine + H2O = L-glutamate + NH4(+). It catalyses the reaction UTP + NH4(+) + ATP = CTP + ADP + phosphate + 2 H(+). It functions in the pathway pyrimidine metabolism; CTP biosynthesis via de novo pathway; CTP from UDP: step 2/2. With respect to regulation, allosterically activated by GTP, when glutamine is the substrate; GTP has no effect on the reaction when ammonia is the substrate. The allosteric effector GTP functions by stabilizing the protein conformation that binds the tetrahedral intermediate(s) formed during glutamine hydrolysis. Inhibited by the product CTP, via allosteric rather than competitive inhibition. Its function is as follows. Catalyzes the ATP-dependent amination of UTP to CTP with either L-glutamine or ammonia as the source of nitrogen. Regulates intracellular CTP levels through interactions with the four ribonucleotide triphosphates. The sequence is that of CTP synthase from Buchnera aphidicola subsp. Schizaphis graminum (strain Sg).